A 692-amino-acid polypeptide reads, in one-letter code: Elongation factor G (692 aa).

Residues 8–282 (ENTRNIGIMA…GVVDYLPSPV (275 aa)) form the tr-type G domain. GTP contacts are provided by residues 17-24 (AHIDAGKT), 81-85 (DTPGH), and 135-138 (NKMD).

This sequence belongs to the TRAFAC class translation factor GTPase superfamily. Classic translation factor GTPase family. EF-G/EF-2 subfamily.

It localises to the cytoplasm. Its function is as follows. Catalyzes the GTP-dependent ribosomal translocation step during translation elongation. During this step, the ribosome changes from the pre-translocational (PRE) to the post-translocational (POST) state as the newly formed A-site-bound peptidyl-tRNA and P-site-bound deacylated tRNA move to the P and E sites, respectively. Catalyzes the coordinated movement of the two tRNA molecules, the mRNA and conformational changes in the ribosome. The protein is Elongation factor G of Anoxybacillus flavithermus (strain DSM 21510 / WK1).